The following is a 545-amino-acid chain: Thermosome subunit (545 aa).

It belongs to the TCP-1 chaperonin family. As to quaternary structure, forms an oligomeric complex of eight-membered rings.

Its function is as follows. Molecular chaperone; binds unfolded polypeptides in vitro, and has a weak ATPase activity. This is Thermosome subunit (ths) from Methanopyrus kandleri (strain AV19 / DSM 6324 / JCM 9639 / NBRC 100938).